A 379-amino-acid polypeptide reads, in one-letter code: Cytochrome b (379 aa).

Transmembrane regions (helical) follow at residues 33–53 (FGSL…FLAM), 77–98 (WLIR…FIHV), 113–133 (WNIG…GYVL), and 178–198 (FFAF…VHLL). Histidine 83 and histidine 97 together coordinate heme b. 2 residues coordinate heme b: histidine 182 and histidine 196. Residue histidine 201 participates in a ubiquinone binding. A run of 4 helical transmembrane segments spans residues 226-246 (TKDL…ALFF), 288-308 (LGGV…PLLN), 320-340 (VTQV…WIGG), and 347-367 (FTTI…ILIP).

This sequence belongs to the cytochrome b family. The cytochrome bc1 complex contains 11 subunits: 3 respiratory subunits (MT-CYB, CYC1 and UQCRFS1), 2 core proteins (UQCRC1 and UQCRC2) and 6 low-molecular weight proteins (UQCRH/QCR6, UQCRB/QCR7, UQCRQ/QCR8, UQCR10/QCR9, UQCR11/QCR10 and a cleavage product of UQCRFS1). This cytochrome bc1 complex then forms a dimer. It depends on heme b as a cofactor.

It is found in the mitochondrion inner membrane. Functionally, component of the ubiquinol-cytochrome c reductase complex (complex III or cytochrome b-c1 complex) that is part of the mitochondrial respiratory chain. The b-c1 complex mediates electron transfer from ubiquinol to cytochrome c. Contributes to the generation of a proton gradient across the mitochondrial membrane that is then used for ATP synthesis. The sequence is that of Cytochrome b (MT-CYB) from Akodon mystax (Caparao grass mouse).